We begin with the raw amino-acid sequence, 98 residues long: NADH-ubiquinone oxidoreductase chain 4L (98 aa).

The next 3 membrane-spanning stretches (helical) occupy residues 1–21 (MSLVYMNIMIAFSISLLGLLM), 25–45 (HLMSSLLCLEGMMLALFILST), and 67–87 (AACEAAVGLSLLVMVSNTYGV).

It belongs to the complex I subunit 4L family. In terms of assembly, core subunit of respiratory chain NADH dehydrogenase (Complex I) which is composed of 45 different subunits.

The protein resides in the mitochondrion inner membrane. The enzyme catalyses a ubiquinone + NADH + 5 H(+)(in) = a ubiquinol + NAD(+) + 4 H(+)(out). Its function is as follows. Core subunit of the mitochondrial membrane respiratory chain NADH dehydrogenase (Complex I) which catalyzes electron transfer from NADH through the respiratory chain, using ubiquinone as an electron acceptor. Part of the enzyme membrane arm which is embedded in the lipid bilayer and involved in proton translocation. The protein is NADH-ubiquinone oxidoreductase chain 4L (MT-ND4L) of Talpa europaea (European mole).